Reading from the N-terminus, the 249-residue chain is Glutathione S-transferase S1 (249 aa).

Positions 1–38 (MADEAQAPPAEGAPPAEGEAPPPAEGAEGAVEGGEAAP) are enriched in low complexity. A disordered region spans residues 1–42 (MADEAQAPPAEGAPPAEGEAPPPAEGAEGAVEGGEAAPPAEP). Positions 48 to 125 (HSYTLFYFNV…FLAKTVGLCG (78 aa)) constitute a GST N-terminal domain. Residues Tyr-54, Trp-85, Lys-89, 96–97 (QM), and 109–110 (QS) contribute to the glutathione site. The GST C-terminal domain occupies 127–249 (TPWEDLQIDI…WIEKRPVTEV (123 aa)).

It belongs to the GST superfamily. Sigma family. As to quaternary structure, homodimer.

The catalysed reaction is RX + glutathione = an S-substituted glutathione + a halide anion + H(+). Conjugation of reduced glutathione to a wide number of exogenous and endogenous hydrophobic electrophiles. May be involved in the detoxification of metabolites produced during cellular division and morphogenesis. In Drosophila melanogaster (Fruit fly), this protein is Glutathione S-transferase S1.